The chain runs to 529 residues: Peptide chain release factor 3 (529 aa).

Residues 11–280 form the tr-type G domain; it reads AKRRTFAIIS…GLVEWAPAPM (270 aa). Residues 20–27, 88–92, and 142–145 each bind GTP; these read SHPDAGKT, DTPGH, and NKLD.

Belongs to the TRAFAC class translation factor GTPase superfamily. Classic translation factor GTPase family. PrfC subfamily.

The protein resides in the cytoplasm. Increases the formation of ribosomal termination complexes and stimulates activities of RF-1 and RF-2. It binds guanine nucleotides and has strong preference for UGA stop codons. It may interact directly with the ribosome. The stimulation of RF-1 and RF-2 is significantly reduced by GTP and GDP, but not by GMP. This is Peptide chain release factor 3 from Salmonella arizonae (strain ATCC BAA-731 / CDC346-86 / RSK2980).